The sequence spans 329 residues: MSTASAFAINAPSFVNASSLKKSSSSARSGVLSARFTCNSSSSSSSATPPSLIRNEPVFAAPAPIITPNWTEDGNESYEEAIDALKKMLIEKGELEPVAAARIDQITAQAAAPDTKAPFDPVERIKSGFVKFKTEKFVTNPVLYDELAKGQSPKFMVFACSDSRVCPSHVLDFQPGEAFVVRNVANMVPPFDKTKYSGVGAAVEYAVLHLKVQEIFVIGHSRCGGIKGLMTFPDEGPHSTDFIEDWVKVCLPAKSKVVAEHNGTHLDDQCVLCEKEAVNVSLGNLLTYPFVRDGLRNNTLALKGGHYDFVNGTFELWALDFGLSSPTSV.

Residues 1 to 108 form a chloroplast transit peptide-like region; it reads MSTASAFAIN…AAARIDQITA (108 aa).

This sequence belongs to the beta-class carbonic anhydrase family. Homohexamer.

Its subcellular location is the cytoplasm. It catalyses the reaction hydrogencarbonate + H(+) = CO2 + H2O. Reversible hydration of carbon dioxide. The polypeptide is Carbonic anhydrase (Flaveria pringlei).